Here is a 422-residue protein sequence, read N- to C-terminus: Elongation factor 1-gamma (422 aa).

A GST N-terminal domain is found at 1-82 (MALVLHAGKT…YVARLKADNP (82 aa)). In terms of domain architecture, GST C-terminal spans 87–215 (SLIDYAHIEQ…VKQTESVPPV (129 aa)). Residues 210–269 (ESVPPVPSAKKPSQPKETKSKAKEEPKKEAKKEPAKPKAEAAEEVEEAPKPKPKNPLDLL) form a disordered region. Residues 223–250 (QPKETKSKAKEEPKKEAKKEPAKPKAEA) show a composition bias toward basic and acidic residues. The 161-residue stretch at 262–422 (PKNPLDLLPP…EALLDAKCFK (161 aa)) folds into the EF-1-gamma C-terminal domain.

As to quaternary structure, EF-1 is composed of four subunits: alpha, beta, delta, and gamma.

Functionally, probably plays a role in anchoring the complex to other cellular components. This is Elongation factor 1-gamma from Prunus avium (Cherry).